A 30-amino-acid chain; its full sequence is Cycloviolacin-O18 (30 aa).

The segment at residues 1-30 (GIPCGESCVYIPCTVTALAGCKCKSKVCYN) is a cross-link (cyclopeptide (Gly-Asn)). Cystine bridges form between Cys-4-Cys-21, Cys-8-Cys-23, and Cys-13-Cys-28.

This is a cyclic peptide. Expressed in leaves, petals and petioles but not in roots and runners (at protein level).

Probably participates in a plant defense mechanism. This is Cycloviolacin-O18 from Viola odorata (Sweet violet).